The primary structure comprises 423 residues: Gamma-glutamyl phosphate reductase (423 aa).

This sequence belongs to the gamma-glutamyl phosphate reductase family.

Its subcellular location is the cytoplasm. It carries out the reaction L-glutamate 5-semialdehyde + phosphate + NADP(+) = L-glutamyl 5-phosphate + NADPH + H(+). Its pathway is amino-acid biosynthesis; L-proline biosynthesis; L-glutamate 5-semialdehyde from L-glutamate: step 2/2. Functionally, catalyzes the NADPH-dependent reduction of L-glutamate 5-phosphate into L-glutamate 5-semialdehyde and phosphate. The product spontaneously undergoes cyclization to form 1-pyrroline-5-carboxylate. This chain is Gamma-glutamyl phosphate reductase, found in Burkholderia pseudomallei (strain 1710b).